The chain runs to 177 residues: Probable adenylyl-sulfate kinase (177 aa).

An ATP-binding site is contributed by 12-19 (GLSGAGKT). S86 functions as the Phosphoserine intermediate in the catalytic mechanism.

The protein belongs to the APS kinase family.

It catalyses the reaction adenosine 5'-phosphosulfate + ATP = 3'-phosphoadenylyl sulfate + ADP + H(+). It functions in the pathway sulfur metabolism; hydrogen sulfide biosynthesis; sulfite from sulfate: step 2/3. Catalyzes the synthesis of activated sulfate. The polypeptide is Probable adenylyl-sulfate kinase (cysC) (Synechocystis sp. (strain ATCC 27184 / PCC 6803 / Kazusa)).